A 121-amino-acid polypeptide reads, in one-letter code: MARVKYGKVKVTRARRKRWIKLAKGYFGTKKSSYKKAHEQVIRSMAYAFIGRKERKRDFRSLWIVRINAAVRPEGLSYSTFMHGLKLANININRKMLSELAINNNEEFKKIVKQAKKALNK.

It belongs to the bacterial ribosomal protein bL20 family.

Functionally, binds directly to 23S ribosomal RNA and is necessary for the in vitro assembly process of the 50S ribosomal subunit. It is not involved in the protein synthesizing functions of that subunit. The protein is Large ribosomal subunit protein bL20 of Mycoplasma mycoides subsp. mycoides SC (strain CCUG 32753 / NCTC 10114 / PG1).